A 166-amino-acid polypeptide reads, in one-letter code: Methylmalonyl-CoA epimerase, mitochondrial (166 aa).

A mitochondrion-targeting transit peptide spans 1 to 23 (MFKQLIKTTLTNSRSFSTNTGSG). The 130-residue stretch at 37-166 (KLNHVAIATP…NGVLVELEEK (130 aa)) folds into the VOC domain. His-40, His-112, and Glu-162 together coordinate Co(2+).

It belongs to the methylmalonyl-CoA epimerase family.

The protein localises to the mitochondrion. The enzyme catalyses (R)-methylmalonyl-CoA = (S)-methylmalonyl-CoA. Methylmalonyl-CoA epimerase involved in propionyl-CoA metabolism. This Dictyostelium discoideum (Social amoeba) protein is Methylmalonyl-CoA epimerase, mitochondrial (mcee).